A 156-amino-acid chain; its full sequence is Cyanate hydratase (156 aa).

Residues arginine 96, glutamate 99, and serine 122 contribute to the active site.

Belongs to the cyanase family.

The enzyme catalyses cyanate + hydrogencarbonate + 3 H(+) = NH4(+) + 2 CO2. Functionally, catalyzes the reaction of cyanate with bicarbonate to produce ammonia and carbon dioxide. The polypeptide is Cyanate hydratase (Burkholderia ambifaria (strain MC40-6)).